The sequence spans 403 residues: Glutamyl-tRNA reductase 2 (403 aa).

Substrate contacts are provided by residues 47–50 (TCHR), S98, 103–105 (ETD), and Q109. The active-site Nucleophile is C48. Residue 177 to 182 (GAGAVG) participates in NADP(+) binding.

This sequence belongs to the glutamyl-tRNA reductase family. As to quaternary structure, homodimer.

The catalysed reaction is (S)-4-amino-5-oxopentanoate + tRNA(Glu) + NADP(+) = L-glutamyl-tRNA(Glu) + NADPH + H(+). The protein operates within porphyrin-containing compound metabolism; protoporphyrin-IX biosynthesis; 5-aminolevulinate from L-glutamyl-tRNA(Glu): step 1/2. Its function is as follows. Catalyzes the NADPH-dependent reduction of glutamyl-tRNA(Glu) to glutamate 1-semialdehyde (GSA). This chain is Glutamyl-tRNA reductase 2, found in Pyrobaculum arsenaticum (strain DSM 13514 / JCM 11321 / PZ6).